The primary structure comprises 382 residues: Galactokinase (382 aa).

34–37 is a binding site for substrate; that stretch reads EHTD. 124–130 contributes to the ATP binding site; the sequence is GAGLSSS. The Mg(2+) site is built by Ser130 and Glu162. The active-site Proton acceptor is Asp174. Tyr223 lines the substrate pocket.

The protein belongs to the GHMP kinase family. GalK subfamily.

It localises to the cytoplasm. The enzyme catalyses alpha-D-galactose + ATP = alpha-D-galactose 1-phosphate + ADP + H(+). It functions in the pathway carbohydrate metabolism; galactose metabolism. Functionally, catalyzes the transfer of the gamma-phosphate of ATP to D-galactose to form alpha-D-galactose-1-phosphate (Gal-1-P). The polypeptide is Galactokinase (Escherichia coli O127:H6 (strain E2348/69 / EPEC)).